The primary structure comprises 487 residues: Solute carrier family 22 member 15-like (487 aa).

The helical transmembrane segment at A22 to G42 threads the bilayer. N70 is a glycosylation site (N-linked (GlcNAc...) asparagine). A run of 11 helical transmembrane segments spans residues L90–S110, P117–P137, V141–F161, S178–I198, T203–P223, I286–A306, L315–I335, A345–E365, T374–Y394, A406–P426, and M435–P455.

The protein belongs to the major facilitator (TC 2.A.1) superfamily. Organic cation transporter (TC 2.A.1.19) family.

The protein resides in the membrane. Probably transports organic cations. The polypeptide is Solute carrier family 22 member 15-like (slc22a15b) (Xenopus tropicalis (Western clawed frog)).